We begin with the raw amino-acid sequence, 429 residues long: Glutamate-1-semialdehyde 2,1-aminomutase (429 aa).

At K265 the chain carries N6-(pyridoxal phosphate)lysine.

The protein belongs to the class-III pyridoxal-phosphate-dependent aminotransferase family. HemL subfamily. In terms of assembly, homodimer. Pyridoxal 5'-phosphate serves as cofactor.

It localises to the cytoplasm. It carries out the reaction (S)-4-amino-5-oxopentanoate = 5-aminolevulinate. Its pathway is porphyrin-containing compound metabolism; protoporphyrin-IX biosynthesis; 5-aminolevulinate from L-glutamyl-tRNA(Glu): step 2/2. The polypeptide is Glutamate-1-semialdehyde 2,1-aminomutase (Chromohalobacter salexigens (strain ATCC BAA-138 / DSM 3043 / CIP 106854 / NCIMB 13768 / 1H11)).